Reading from the N-terminus, the 642-residue chain is Threonine--tRNA ligase (642 aa).

The 61-residue stretch at 1 to 61 (MPVITLPDGS…DTDAQLAIIT (61 aa)) folds into the TGS domain. Residues 243-534 (DHRKIGKQLD…LTEEFAGFFP (292 aa)) are catalytic. Zn(2+)-binding residues include Cys334, His385, and His511.

This sequence belongs to the class-II aminoacyl-tRNA synthetase family. In terms of assembly, homodimer. Zn(2+) serves as cofactor.

The protein localises to the cytoplasm. It catalyses the reaction tRNA(Thr) + L-threonine + ATP = L-threonyl-tRNA(Thr) + AMP + diphosphate + H(+). Functionally, catalyzes the attachment of threonine to tRNA(Thr) in a two-step reaction: L-threonine is first activated by ATP to form Thr-AMP and then transferred to the acceptor end of tRNA(Thr). Also edits incorrectly charged L-seryl-tRNA(Thr). This Pectobacterium carotovorum subsp. carotovorum (strain PC1) protein is Threonine--tRNA ligase.